Consider the following 229-residue polypeptide: Large ribosomal subunit protein uL1 (229 aa).

This sequence belongs to the universal ribosomal protein uL1 family. In terms of assembly, part of the 50S ribosomal subunit.

Its function is as follows. Binds directly to 23S rRNA. The L1 stalk is quite mobile in the ribosome, and is involved in E site tRNA release. Functionally, protein L1 is also a translational repressor protein, it controls the translation of the L11 operon by binding to its mRNA. This is Large ribosomal subunit protein uL1 from Rhodopseudomonas palustris (strain HaA2).